The primary structure comprises 372 residues: N-methyl-L-tryptophan oxidase (372 aa).

FAD is bound at residue 4-34 (DLIIIGSGSVGAAAGYYATRAGLNVLMTDAH). Position 308 is an S-8alpha-FAD cysteine (C308).

Belongs to the MSOX/MTOX family. MTOX subfamily. As to quaternary structure, monomer. It depends on FAD as a cofactor.

It catalyses the reaction N(alpha)-methyl-L-tryptophan + O2 + H2O = L-tryptophan + formaldehyde + H2O2. Functionally, catalyzes the oxidative demethylation of N-methyl-L-tryptophan. The chain is N-methyl-L-tryptophan oxidase from Escherichia coli O157:H7.